We begin with the raw amino-acid sequence, 167 residues long: Ubiquitin-like-conjugating enzyme ATG10 (167 aa).

Cys133 (glycyl thioester intermediate) is an active-site residue.

It belongs to the ATG10 family. Forms homooligomers. Interacts with ATG7 and ATG12.

It localises to the preautophagosomal structure membrane. Its function is as follows. E2-like enzyme required for the cytoplasm to vacuole transport (Cvt), autophagy and nucleophagy. Acts as an E2-like enzyme that catalyzes the conjugation of ATG12 to ATG5. ATG12 conjugation to ATG5 is required for proper localization of ATG8 to the preautophagosomal structure (PAS). Likely serves as an ATG5-recognition molecule. This Saccharomyces cerevisiae (strain ATCC 204508 / S288c) (Baker's yeast) protein is Ubiquitin-like-conjugating enzyme ATG10 (ATG10).